Here is a 376-residue protein sequence, read N- to C-terminus: MQCALYDAGRCRSCQWIVQPIRDQLSAKTADLKGLLADFSVEQWCAPVSGPEQAFRNKAKMVVSGSVEKPLLGMLHRDGTPEDLSDCPLYPDTFAPVFATLKPFIARAGLTPYNVARKRGELKYILLTESQFDGGMMLRFVLRSETKLAQLRAALPWLQAQLPQLKVITANIQPVHMAIMEGETEIFLTEQQALAERFNDVPLWIRPQSFFQTNPVVASHLYATARDWVRQLPVHHMWDLFCGVGGFGLHCATPEMTLTGIEIAPEAIACAKQSAAELGLTNLHFQALDSTQFATGQGEVPELVLVNPPRRGIGKALCDYLSQMAPEYIIYSSCNAQTMAKDIANLPGYRIERVQLFDMFPHTAHYEVLTLLTKTR.

Positions 3, 11, 14, and 87 each coordinate [4Fe-4S] cluster. Gln-212, Phe-241, Glu-262, and Asn-307 together coordinate S-adenosyl-L-methionine. The active-site Nucleophile is the Cys-334.

Belongs to the class I-like SAM-binding methyltransferase superfamily. RNA M5U methyltransferase family. RlmC subfamily.

The catalysed reaction is uridine(747) in 23S rRNA + S-adenosyl-L-methionine = 5-methyluridine(747) in 23S rRNA + S-adenosyl-L-homocysteine + H(+). Its function is as follows. Catalyzes the formation of 5-methyl-uridine at position 747 (m5U747) in 23S rRNA. The sequence is that of 23S rRNA (uracil(747)-C(5))-methyltransferase RlmC from Citrobacter koseri (strain ATCC BAA-895 / CDC 4225-83 / SGSC4696).